Reading from the N-terminus, the 566-residue chain is 4-hydroxy-7-methoxy-3-oxo-3,4-dihydro-2H-1,4-benzoxazin-2-yl glucoside beta-D-glucosidase 1, chloroplastic (566 aa).

The transit peptide at 1–54 directs the protein to the chloroplast; that stretch reads MAPLLAAAMNHAAAHPGLRSHLVGPNNESFSRHHLPSSSPQSSKRRCNLSFTTR. The segment at 17 to 47 is disordered; that stretch reads GLRSHLVGPNNESFSRHHLPSSSPQSSKRRC. Residues Gln-92, His-196, and 244–245 contribute to the a beta-D-glucoside site; that span reads NE. The Proton donor role is filled by Glu-245. Cys-264 and Cys-270 are disulfide-bonded. Residues 325-361 form a dimerization region; the sequence is SFLDKQAEERSWDINLGWFLEPVVRGDYPFSMRSLAR. Position 387 (Tyr-387) interacts with a beta-D-glucoside. Dimerization stretches follow at residues 394–405 and 450–453; these read NIDISPNYSPVL and KYGN. Residues Glu-460, Trp-511, 518–519, and Tyr-527 contribute to the a beta-D-glucoside site; that span reads EW. Glu-460 (nucleophile) is an active-site residue.

This sequence belongs to the glycosyl hydrolase 1 family. As to quaternary structure, homo- and heterodimer. In terms of tissue distribution, expressed in all seedling parts. Most abundant in the coleoptile.

It is found in the plastid. The protein localises to the chloroplast. It catalyses the reaction Hydrolysis of terminal, non-reducing beta-D-glucosyl residues with release of beta-D-glucose.. The enzyme catalyses DIMBOA beta-D-glucoside + H2O = DIMBOA + D-glucose. The catalysed reaction is DIBOA beta-D-glucoside + H2O = DIBOA + D-glucose. With respect to regulation, reversibly inhibited by micromolar concentrations of Hg(2+) or Ag(+), but irreversibly inhibited by alkylation in presence of urea. Competitive inhibition by p-nitrophenyl beta-D-thioglucoside (pNPTGlc), glucotetrazole, and para-hydroxy-S-mandelonitrile beta-glucoside (dhurrin). Its function is as follows. Is implicated in many functions such as ABA metabolism, hydrolysis of conjugated gibberellins, conversion of storage forms of cytokinins to active forms. Also acts in defense of young plant parts against pests via the production of hydroxamic acids from hydroxamic acid glucosides. Enzymatic activity is highly correlated with plant growth. The preferred substrate is DIMBOA-beta-D-glucoside. Hydrolyzes the chromogenic substrate 6-bromo-2-naphthyl-beta-D-glucoside (6BNGlc) and various artificial aryl beta-glucosides. No activity with cellobiose, arbutin, gentiobiose, linamarin or dhurrin as substrates. This is 4-hydroxy-7-methoxy-3-oxo-3,4-dihydro-2H-1,4-benzoxazin-2-yl glucoside beta-D-glucosidase 1, chloroplastic (GLU1) from Zea mays (Maize).